Here is a 501-residue protein sequence, read N- to C-terminus: MAINAQEISALIKQQIENFKPNFDVTETGVVTYIGDGIARAHGLENVMSGELLNFENGSYGMAQNLESTDVGIIILGDFTDIREGDTIRRTGKIMEVPVGESLIGRVVDPLGRPVDGLGEIHTDKTRPVEAPAPGVMQRKSVSEPLQTGLKAIDALVPIGRGQRELIIGDRQTGKTTIAIDTILNQKDQDMICIYVAIGQKESTVRTQVETLRQYGALDYTIVVTASASQPSPLLFLAPYAGVAMAEEFMYQGKHVLIVYDDLSKQAVAYRELLLLLRRPPGREAFPGDVFYLHSRLLERSAKVSDELGGGSITALPFIETQAGDISAYIATNVISITDGQIFLGDGLFNAGIRPAIDAGSSVSRVGGSAQIKAMKKVAGTLRIDLASYRELEAFTKFGSDLDAATQAKLNRGRRTVEVLKQPVHKPLPVEKQVTILYALTHGFLDTVPVDDIVRFEEEFHAFFDAQHPEILETIRDTKDLPEEAVLDAAITEFLNQSSFQ.

169-176 (GDRQTGKT) is a binding site for ATP.

Belongs to the ATPase alpha/beta chains family. F-type ATPases have 2 components, CF(1) - the catalytic core - and CF(0) - the membrane proton channel. CF(1) has five subunits: alpha(3), beta(3), gamma(1), delta(1), epsilon(1). CF(0) has three main subunits: a(1), b(2) and c(9-12). The alpha and beta chains form an alternating ring which encloses part of the gamma chain. CF(1) is attached to CF(0) by a central stalk formed by the gamma and epsilon chains, while a peripheral stalk is formed by the delta and b chains.

The protein localises to the cell membrane. The catalysed reaction is ATP + H2O + 4 H(+)(in) = ADP + phosphate + 5 H(+)(out). Its function is as follows. Produces ATP from ADP in the presence of a proton gradient across the membrane. The alpha chain is a regulatory subunit. This Streptococcus pneumoniae serotype 2 (strain D39 / NCTC 7466) protein is ATP synthase subunit alpha.